We begin with the raw amino-acid sequence, 145 residues long: Large ribosomal subunit protein uL16 (145 aa).

Positions 1 to 17 are enriched in basic residues; it reads MLMPKRVKHRRVHRGRM. Residues 1–22 are disordered; that stretch reads MLMPKRVKHRRVHRGRMTGKAT.

Belongs to the universal ribosomal protein uL16 family. In terms of assembly, part of the 50S ribosomal subunit.

Functionally, binds 23S rRNA and is also seen to make contacts with the A and possibly P site tRNAs. The polypeptide is Large ribosomal subunit protein uL16 (Ruminiclostridium cellulolyticum (strain ATCC 35319 / DSM 5812 / JCM 6584 / H10) (Clostridium cellulolyticum)).